A 297-amino-acid polypeptide reads, in one-letter code: N-acetylmuramic acid 6-phosphate etherase (297 aa).

The region spanning 55-218 (AAKRYSKGGR…STGVMIKQGK (164 aa)) is the SIS domain. Glu-83 (proton donor) is an active-site residue. The active site involves Glu-114.

Belongs to the GCKR-like family. MurNAc-6-P etherase subfamily. As to quaternary structure, homodimer.

The enzyme catalyses N-acetyl-D-muramate 6-phosphate + H2O = N-acetyl-D-glucosamine 6-phosphate + (R)-lactate. Its pathway is amino-sugar metabolism; N-acetylmuramate degradation. Specifically catalyzes the cleavage of the D-lactyl ether substituent of MurNAc 6-phosphate, producing GlcNAc 6-phosphate and D-lactate. The chain is N-acetylmuramic acid 6-phosphate etherase from Lactobacillus gasseri (strain ATCC 33323 / DSM 20243 / BCRC 14619 / CIP 102991 / JCM 1131 / KCTC 3163 / NCIMB 11718 / NCTC 13722 / AM63).